Reading from the N-terminus, the 803-residue chain is Bifunctional enzyme MurC/Ddl (803 aa).

Residues 1 to 446 form a UDP-N-acetylmuramate--alanine ligase region; sequence MMKSLFYHFI…GEKLRDFEPQ (446 aa). ATP contacts are provided by residues 111–117 and 600–655; these read GSHGKTT and VEAF…CKEI. The segment at 447 to 803 is D-alanine--D-alanine ligase; it reads KLHLGIICGG…SFVDQAFAIQ (357 aa). The 212-residue stretch at 567 to 778 folds into the ATP-grasp domain; it reads KRFMSDLGIP…YEQIVHQLVI (212 aa). Residues aspartate 732, glutamate 745, and asparagine 747 each contribute to the Mg(2+) site.

This sequence in the N-terminal section; belongs to the MurCDEF family. It in the C-terminal section; belongs to the D-alanine--D-alanine ligase family. The cofactor is Mg(2+). Mn(2+) is required as a cofactor.

It localises to the cytoplasm. It carries out the reaction UDP-N-acetyl-alpha-D-muramate + L-alanine + ATP = UDP-N-acetyl-alpha-D-muramoyl-L-alanine + ADP + phosphate + H(+). It catalyses the reaction 2 D-alanine + ATP = D-alanyl-D-alanine + ADP + phosphate + H(+). It functions in the pathway cell wall biogenesis; peptidoglycan biosynthesis. In terms of biological role, cell wall formation. The polypeptide is Bifunctional enzyme MurC/Ddl (murC/ddl) (Chlamydia trachomatis serovar D (strain ATCC VR-885 / DSM 19411 / UW-3/Cx)).